The primary structure comprises 452 residues: Protoheme IX farnesyltransferase, mitochondrial (452 aa).

A mitochondrion-targeting transit peptide spans 1–27 (MSLVIQPLLMRALNPNLSSILISGRGF). 7 helical membrane-spanning segments follow: residues 152–172 (VLVM…ATVL), 235–255 (ILWL…IALY), 267–287 (IINT…GWAA), 291–311 (LSHP…FPHF), 341–361 (VALR…YFNV), 364–386 (WYYQ…KFYF), and 417–437 (TFWV…LHKK).

The protein belongs to the UbiA prenyltransferase family.

The protein localises to the mitochondrion membrane. Its function is as follows. Converts protoheme IX and farnesyl diphosphate to heme O. In Kluyveromyces lactis (strain ATCC 8585 / CBS 2359 / DSM 70799 / NBRC 1267 / NRRL Y-1140 / WM37) (Yeast), this protein is Protoheme IX farnesyltransferase, mitochondrial (COX10).